The chain runs to 294 residues: 2-oxoglutaramate amidase (294 aa).

The CN hydrolase domain occupies 16–261 (LDVAAVQVKF…EAVLRATLNF (246 aa)). Catalysis depends on E55, which acts as the Proton acceptor. The active-site Proton donor is K129. The active-site Nucleophile is C168.

The protein belongs to the carbon-nitrogen hydrolase superfamily. NIT1/NIT2 family.

It carries out the reaction 2-oxoglutaramate + H2O = 2-oxoglutarate + NH4(+). The protein operates within alkaloid degradation; nicotine degradation. Its function is as follows. Catalyzes the conversion of 2-oxoglutaramate to 2-oxoglutarate. Together with glutamate dehydrogenase, may form a physiologically relevant enzyme couple, leading to transformation of metabolically inert 2-oxoglutaramate derived from trihydroxypyridine into glutamate, a central compound of nitrogen metabolism. In Paenarthrobacter nicotinovorans (Arthrobacter nicotinovorans), this protein is 2-oxoglutaramate amidase.